The sequence spans 118 residues: Large ribosomal subunit protein bL20 (118 aa).

It belongs to the bacterial ribosomal protein bL20 family.

Its function is as follows. Binds directly to 23S ribosomal RNA and is necessary for the in vitro assembly process of the 50S ribosomal subunit. It is not involved in the protein synthesizing functions of that subunit. The sequence is that of Large ribosomal subunit protein bL20 from Stutzerimonas stutzeri (strain A1501) (Pseudomonas stutzeri).